The following is a 689-amino-acid chain: Glycine--tRNA ligase beta subunit (689 aa).

It belongs to the class-II aminoacyl-tRNA synthetase family. As to quaternary structure, tetramer of two alpha and two beta subunits.

The protein localises to the cytoplasm. The catalysed reaction is tRNA(Gly) + glycine + ATP = glycyl-tRNA(Gly) + AMP + diphosphate. The chain is Glycine--tRNA ligase beta subunit from Shewanella baltica (strain OS223).